The following is a 217-amino-acid chain: Thiamine-phosphate synthase (217 aa).

Residues 44-48 and Asn-76 each bind 4-amino-2-methyl-5-(diphosphooxymethyl)pyrimidine; that span reads QYREK. Positions 77 and 96 each coordinate Mg(2+). Ser-115 serves as a coordination point for 4-amino-2-methyl-5-(diphosphooxymethyl)pyrimidine. 141–143 lines the 2-[(2R,5Z)-2-carboxy-4-methylthiazol-5(2H)-ylidene]ethyl phosphate pocket; it reads TKT. Lys-144 is a binding site for 4-amino-2-methyl-5-(diphosphooxymethyl)pyrimidine. 2-[(2R,5Z)-2-carboxy-4-methylthiazol-5(2H)-ylidene]ethyl phosphate-binding positions include Gly-172 and 192–193; that span reads VS.

It belongs to the thiamine-phosphate synthase family. It depends on Mg(2+) as a cofactor.

It carries out the reaction 2-[(2R,5Z)-2-carboxy-4-methylthiazol-5(2H)-ylidene]ethyl phosphate + 4-amino-2-methyl-5-(diphosphooxymethyl)pyrimidine + 2 H(+) = thiamine phosphate + CO2 + diphosphate. The catalysed reaction is 2-(2-carboxy-4-methylthiazol-5-yl)ethyl phosphate + 4-amino-2-methyl-5-(diphosphooxymethyl)pyrimidine + 2 H(+) = thiamine phosphate + CO2 + diphosphate. The enzyme catalyses 4-methyl-5-(2-phosphooxyethyl)-thiazole + 4-amino-2-methyl-5-(diphosphooxymethyl)pyrimidine + H(+) = thiamine phosphate + diphosphate. It participates in cofactor biosynthesis; thiamine diphosphate biosynthesis; thiamine phosphate from 4-amino-2-methyl-5-diphosphomethylpyrimidine and 4-methyl-5-(2-phosphoethyl)-thiazole: step 1/1. Its function is as follows. Condenses 4-methyl-5-(beta-hydroxyethyl)thiazole monophosphate (THZ-P) and 2-methyl-4-amino-5-hydroxymethyl pyrimidine pyrophosphate (HMP-PP) to form thiamine monophosphate (TMP). The protein is Thiamine-phosphate synthase of Lawsonia intracellularis (strain PHE/MN1-00).